A 93-amino-acid polypeptide reads, in one-letter code: Integration host factor subunit beta (93 aa).

The protein belongs to the bacterial histone-like protein family. Heterodimer of an alpha and a beta chain.

This protein is one of the two subunits of integration host factor, a specific DNA-binding protein that functions in genetic recombination as well as in transcriptional and translational control. The sequence is that of Integration host factor subunit beta from Cereibacter sphaeroides (strain KD131 / KCTC 12085) (Rhodobacter sphaeroides).